The primary structure comprises 386 residues: Protein U3 (386 aa).

The polypeptide is Protein U3 (U3) (Human herpesvirus 6B (strain Z29) (HHV-6 variant B)).